A 969-amino-acid chain; its full sequence is Lateral signaling target protein 2 homolog (969 aa).

Lys-87 is covalently cross-linked (Glycyl lysine isopeptide (Lys-Gly) (interchain with G-Cter in ubiquitin)). Disordered regions lie at residues 290 to 323 (QDGE…GVEE), 336 to 360 (SVWK…EEPI), 390 to 437 (STLL…YHDD), and 715 to 777 (RSEC…DMSE). The span at 295 to 310 (PTSSTNDPSASTGPDS) shows a compositional bias: polar residues. Positions 336 to 346 (SVWKEEEEKQV) are enriched in basic and acidic residues. Residues 391–402 (TLLSPPSQNQSP) show a composition bias toward polar residues. Over residues 411 to 423 (GSSLEGSSATSST) the composition is skewed to low complexity. The segment covering 715 to 729 (RSECFGKQSKDDNRK) has biased composition (basic and acidic residues). 2 stretches are compositionally biased toward low complexity: residues 732-745 (SSSQ…VPSS) and 756-769 (SLSS…VSSL). Residues 899–959 (DEACNSCIAC…VCTHCYMFHV (61 aa)) form an FYVE-type zinc finger. Zn(2+) is bound by residues Cys-905, Cys-908, Cys-921, Cys-924, Cys-929, Cys-932, Cys-951, and Cys-954.

This sequence belongs to the lst-2 family. Monoubiquitination at Lys-87 prevents binding to phosphatidylinositol 3-phosphate (PI3P) and localization to early endosome membranes.

It localises to the cytoplasm. The protein resides in the cytosol. It is found in the early endosome membrane. Functionally, negative regulator of epidermal growth factor receptor (EGFR) signaling. Acts by promoting EGFR degradation in endosomes when not monoubiquitinated. In Danio rerio (Zebrafish), this protein is Lateral signaling target protein 2 homolog (zfyve28).